The chain runs to 363 residues: Peptide chain release factor 1 (363 aa).

Gln-237 is subject to N5-methylglutamine.

This sequence belongs to the prokaryotic/mitochondrial release factor family. Methylated by PrmC. Methylation increases the termination efficiency of RF1.

The protein localises to the cytoplasm. In terms of biological role, peptide chain release factor 1 directs the termination of translation in response to the peptide chain termination codons UAG and UAA. This is Peptide chain release factor 1 from Marinobacter nauticus (strain ATCC 700491 / DSM 11845 / VT8) (Marinobacter aquaeolei).